A 439-amino-acid polypeptide reads, in one-letter code: Sex-determination protein fem-3 (439 aa).

The segment at 21–45 is disordered; sequence RRLKRKANDDDDDDETVRERVDDAE.

As to quaternary structure, component of a complex containing fem-1, fem-2 and fem-3. Interacts with fem-1 and fem-2 (via N-terminus). Part of a E3 ubiquitin-protein ligase complex, at least composed of cul-2, elc-1, tra-1, fem-1, fem-2 and fem-3; mediates the ubiquitination and subsequent proteasomal degradation of tra-1. Interacts with tra-1. Interacts with sel-10. Interacts with tra-2.

Functionally, required for male development. In XO (male) animals, fem-3 directs male differentiation in all tissues. In XX (hermaphrodite) animals, it specifies the first 80 or so germ cells to be sperm. Negatively regulates male development when bound to tra-2. Together with fem-2 associates with the CBC(fem-1) E3 ubiquitin-protein ligase complex which mediates the ubiquitination and subsequent proteasomal degradation of tra-1. This is Sex-determination protein fem-3 from Caenorhabditis remanei (Caenorhabditis vulgaris).